Reading from the N-terminus, the 116-residue chain is Putative membrane protein (116 aa).

Residues 13 to 33 (VISIITFILVIAIFVIEIVSC) form a helical membrane-spanning segment.

Its subcellular location is the host membrane. The sequence is that of Putative membrane protein from Alethinophid 1 reptarenavirus (isolate AlRrV1/Boa/USA/BC/2009) (Golden Gate virus).